Reading from the N-terminus, the 251-residue chain is Phosphate import ATP-binding protein PstB 2 (251 aa).

The region spanning 5–246 (ITTKDVHLYY…PDKEQTADYL (242 aa)) is the ABC transporter domain. 37 to 44 (GPSGCGKS) serves as a coordination point for ATP.

It belongs to the ABC transporter superfamily. Phosphate importer (TC 3.A.1.7) family. In terms of assembly, the complex is composed of two ATP-binding proteins (PstB), two transmembrane proteins (PstC and PstA) and a solute-binding protein (PstS).

The protein localises to the cell membrane. It carries out the reaction phosphate(out) + ATP + H2O = ADP + 2 phosphate(in) + H(+). In terms of biological role, part of the ABC transporter complex PstSACB involved in phosphate import. Responsible for energy coupling to the transport system. This chain is Phosphate import ATP-binding protein PstB 2, found in Ligilactobacillus salivarius (strain UCC118) (Lactobacillus salivarius).